The sequence spans 384 residues: Tryptophan--tRNA ligase (384 aa).

The 'HIGH' region signature appears at 81–89 (PSGPMHIGH). Residues 252-256 (KMSAS) carry the 'KMSKS' region motif.

It belongs to the class-I aminoacyl-tRNA synthetase family.

It localises to the cytoplasm. It carries out the reaction tRNA(Trp) + L-tryptophan + ATP = L-tryptophyl-tRNA(Trp) + AMP + diphosphate + H(+). The chain is Tryptophan--tRNA ligase from Thermococcus sibiricus (strain DSM 12597 / MM 739).